A 150-amino-acid polypeptide reads, in one-letter code: MNKTSVPSIDSIERQWFLVDAENQTLGRLATEVASVLRGKNKPSFTPHLDTGDFVVVVNADKIRVSGNKANQKLYRRHSGRPGGMKVETFQALQDRLPERIVEKAIKGMLPHNALGRQLFRKLKVYRGPEHPHSAQRPQTLQLNPAASSQ.

Residues 129 to 150 (PEHPHSAQRPQTLQLNPAASSQ) form a disordered region. Over residues 136–150 (QRPQTLQLNPAASSQ) the composition is skewed to polar residues.

The protein belongs to the universal ribosomal protein uL13 family. As to quaternary structure, part of the 50S ribosomal subunit.

Functionally, this protein is one of the early assembly proteins of the 50S ribosomal subunit, although it is not seen to bind rRNA by itself. It is important during the early stages of 50S assembly. In Prochlorococcus marinus (strain MIT 9303), this protein is Large ribosomal subunit protein uL13.